The chain runs to 222 residues: Charged multivesicular body protein 2a (222 aa).

Position 1 is an N-acetylmethionine (Met1). A coiled-coil region spans residues 12 to 53; the sequence is EELLRQNQRALNRAMRELDRERQKLETQEKKIIADIKKMAKQ. Positions 56–222 are interaction with VPS4B; that stretch reads MDAVRIMAKD…EERLKNLRRD (167 aa). A compositionally biased stretch (polar residues) spans 179–188; the sequence is LSNLPSTGGS. A disordered region spans residues 179–198; it reads LSNLPSTGGSLSVAAGGKKA. At Ser184 the chain carries Phosphoserine. Thr185 is subject to Phosphothreonine. Residues Ser188, Ser190, and Ser203 each carry the phosphoserine modification. Residues 195–222 are a coiled coil; the sequence is GKKAEATASALADADADLEERLKNLRRD. Positions 210–220 match the MIT-interacting motif motif; that stretch reads ADLEERLKNLR. Residues 217–222 are interaction with VTA1; it reads KNLRRD.

The protein belongs to the SNF7 family. As to quaternary structure, probable core component of the endosomal sorting required for transport complex III (ESCRT-III). ESCRT-III components are thought to multimerize to form a flat lattice on the perimeter membrane of the endosome. Several assembly forms of ESCRT-III may exist that interact and act sequentially. In vitro, heteromerizes with CHMP3 (but not CHMP4) to form helical tubular structures that expose membrane-interacting sites on the outside whereas VPS4B can associate on the inside of the tubule. Interacts with CHMP1B, CHMP2B, CHMP3, CHMP4A, CHMP4B, CHMP4C and CHMP5. Interacts with VPS4A; the interaction is direct. Interacts with VPS4B; the interaction is direct. Interacts with MITD1. Interacts with VTA1; the interaction probably involves the open conformation of CHMP2A. Post-translationally, ISGylated in a CHMP5-dependent manner. Isgylation weakens and inhibits its interactions with VPS4A and VTA1 respectively. In terms of tissue distribution, widely expressed. Highly expressed in brain, heart, liver and kidney.

Its subcellular location is the late endosome membrane. It is found in the cytoplasm. It localises to the nucleus envelope. In terms of biological role, probable core component of the endosomal sorting required for transport complex III (ESCRT-III) which is involved in multivesicular bodies (MVBs) formation and sorting of endosomal cargo proteins into MVBs. MVBs contain intraluminal vesicles (ILVs) that are generated by invagination and scission from the limiting membrane of the endosome and mostly are delivered to lysosomes enabling degradation of membrane proteins, such as stimulated growth factor receptors, lysosomal enzymes and lipids. The MVB pathway appears to require the sequential function of ESCRT-O, -I,-II and -III complexes. ESCRT-III proteins mostly dissociate from the invaginating membrane before the ILV is released. The ESCRT machinery also functions in topologically equivalent membrane fission events, such as the terminal stages of cytokinesis. Together with SPAST, the ESCRT-III complex promotes nuclear envelope sealing and mitotic spindle disassembly during late anaphase. Recruited to the reforming nuclear envelope (NE) during anaphase by LEMD2. ESCRT-III proteins are believed to mediate the necessary vesicle extrusion and/or membrane fission activities, possibly in conjunction with the AAA ATPase VPS4. The sequence is that of Charged multivesicular body protein 2a (Chmp2a) from Mus musculus (Mouse).